Consider the following 575-residue polypeptide: Cyclic nucleotide-gated channel alpha-4 (575 aa).

Residues 1 to 38 (MSQDGKVKTTESTPPAPTKARKWLPVLDPSGDYYYWWL) lie on the Cytoplasmic side of the membrane. The helical transmembrane segment at 39–60 (NTMVFPIMYNLIIVVCRACFPD) threads the bilayer. The Extracellular segment spans residues 61 to 70 (LQHSYLVAWF). A helical membrane pass occupies residues 71-91 (VLDYTSDLLYLLDIGVRFHTG). The Cytoplasmic portion of the chain corresponds to 92-116 (FLEQGILVVDKGMIASRYVRTWSFL). A helical transmembrane segment spans residues 117-135 (LDLASLVPTDAAYVQLGPH). Residues 136-140 (IPTLR) lie on the Extracellular side of the membrane. A helical transmembrane segment spans residues 141 to 159 (LNRFLRVPRLFEAFDRTET). Topologically, residues 160 to 166 (RTAYPNA) are cytoplasmic. Residues 164-272 (PNAFRIAKLM…GSMSSVIYNM (109 aa)) form an ion conduction pathway region. Residues 167 to 190 (FRIAKLMLYIFVVIHWNSCLYFAL) form a helical membrane-spanning segment. Residues 191–213 (SRYLGFGRDAWVYPDPAQPGFER) are Extracellular-facing. 2 helical membrane-spanning segments follow: residues 214-248 (LRRQ…LFMV) and 249-273 (GDFL…YNMN). The selectivity filter stretch occupies residues 231 to 234 (TVGD). Residues 274–350 (TADAAFYPDH…STLSRVQIFQ (77 aa)) are C-linker. Topologically, residues 274-575 (TADAAFYPDH…AGQAGPSGIE (302 aa)) are cytoplasmic. The short motif at 292–302 (LQHVNKRLERR) is the IQ-type element. 348–471 (IFQNCEASLL…AVMEEKGREI (124 aa)) lines the a nucleoside 3',5'-cyclic phosphate pocket. The cyclic nucleotide-binding domain stretch occupies residues 354-474 (ASLLEELVLK…EEKGREILLK (121 aa)). 3',5'-cyclic GMP is bound by residues Gly-414, Ser-417, Arg-430, and Thr-431. 2 residues coordinate 3',5'-cyclic AMP: Arg-430 and Thr-431. Residues 493 to 547 (TESRLKGLDQQLDDLQTKFARLLAELESSALKIAYRIERLEWQTREWPMPEDMGE) adopt a coiled-coil conformation. A disordered region spans residues 537–575 (REWPMPEDMGEADDEAEPGEGTSKDGEGKAGQAGPSGIE). Over residues 544 to 554 (DMGEADDEAEP) the composition is skewed to acidic residues.

Belongs to the cyclic nucleotide-gated cation channel (TC 1.A.1.5) family. CNGA4 subfamily. The olfactory cyclic nucleotide-gated channel is an heterotetramer composed of CNGA2, CNGA4 and CNGB1b subunits with 2:1:1 stoichiometry. May form homomeric channels gated by nitric oxide. N-glycosylated. In terms of tissue distribution, olfactory neurons. Expressed in olfactory sensory cilia (at protein level).

The protein localises to the cell projection. Its subcellular location is the cilium membrane. It carries out the reaction Ca(2+)(in) = Ca(2+)(out). The catalysed reaction is Na(+)(in) = Na(+)(out). The enzyme catalyses K(+)(in) = K(+)(out). It catalyses the reaction NH4(+)(in) = NH4(+)(out). It carries out the reaction Rb(+)(in) = Rb(+)(out). The catalysed reaction is Li(+)(in) = Li(+)(out). The enzyme catalyses Cs(+)(in) = Cs(+)(out). Its activity is regulated as follows. Ca(2+)-calmodulin exerts its inhibitory effect in cAMP sensitivity by binding to IQ-like motif of CNGA4 and preferably binds to the channel in the closed state. Inhibition by PIP3 of the CNG channel probably occurs via CGNA2 binding. Ca(2+) currents are inhibited by pimozide, an L-type Ca(2+) channel blocker. Its function is as follows. Pore-forming subunit of the olfactory cyclic nucleotide-gated channel. Operates in the cilia of olfactory sensory neurons where chemical stimulation of the odorant is converted to an electrical signal. Mediates odorant-induced cAMP-dependent Ca(2+) influx triggering neuron depolarization. The rise of intracellular Ca(2+) levels potentiates the olfactory response by activating Ca(2+)-dependent Cl(-) channels, but it also serves as a negative feedback signal to desensitize the channel for rapid adaptation to odorants. Conducts cAMP- and cGMP-gated ion currents, with permeability for monovalent and divalent cations. May conduct nitric oxide-gated Ca(2+) currents relevant to neurons of vomeronasal organ, a system involved in the perception of pheromones. The chain is Cyclic nucleotide-gated channel alpha-4 from Rattus norvegicus (Rat).